Here is a 448-residue protein sequence, read N- to C-terminus: Divalent metal cation transporter MntH (448 aa).

The segment covering 1–10 (MKKDKTERTK) has biased composition (basic and acidic residues). Residues 1 to 20 (MKKDKTERTKQSWRKAQNAP) form a disordered region. The next 11 membrane-spanning stretches (helical) occupy residues 41 to 61 (LFAF…PGNW), 69 to 89 (SEFG…AVLL), 117 to 137 (GFVL…AEVI), 147 to 167 (FGIP…LVLF), 176 to 196 (IEVI…AEMV), 215 to 235 (IVTN…TVMP), 270 to 290 (FSLT…AAAF), 307 to 327 (LLNP…ALLA), 363 to 383 (VLAI…GINE), 384 to 404 (LLIF…IPLV), and 424 to 444 (IISW…LFYT).

The protein belongs to the NRAMP family.

The protein localises to the cell membrane. In terms of biological role, h(+)-stimulated, divalent metal cation uptake system. The polypeptide is Divalent metal cation transporter MntH (Listeria monocytogenes serotype 4b (strain CLIP80459)).